The sequence spans 289 residues: Protoheme IX farnesyltransferase 2 (289 aa).

9 helical membrane-spanning segments follow: residues 13-33, 37-57, 86-106, 109-129, 137-157, 159-179, 207-227, 232-252, and 267-287; these read LEIT…VPGS, IYDL…ASIF, LFFI…FILL, VTSA…TIIL, IVIG…SITG, VSAT…THFW, EFWI…PLFI, VGLL…YYVA, and AFHF…LILV.

Belongs to the UbiA prenyltransferase family. Protoheme IX farnesyltransferase subfamily.

Its subcellular location is the cell membrane. The catalysed reaction is heme b + (2E,6E)-farnesyl diphosphate + H2O = Fe(II)-heme o + diphosphate. It functions in the pathway porphyrin-containing compound metabolism; heme O biosynthesis; heme O from protoheme: step 1/1. Converts heme B (protoheme IX) to heme O by substitution of the vinyl group on carbon 2 of heme B porphyrin ring with a hydroxyethyl farnesyl side group. This Picrophilus torridus (strain ATCC 700027 / DSM 9790 / JCM 10055 / NBRC 100828 / KAW 2/3) protein is Protoheme IX farnesyltransferase 2.